A 422-amino-acid polypeptide reads, in one-letter code: UDP-N-acetylglucosamine 1-carboxyvinyltransferase (422 aa).

22-23 lines the phosphoenolpyruvate pocket; sequence KN. R95 contacts UDP-N-acetyl-alpha-D-glucosamine. C119 (proton donor) is an active-site residue. 2-(S-cysteinyl)pyruvic acid O-phosphothioketal is present on C119. UDP-N-acetyl-alpha-D-glucosamine contacts are provided by residues 124–128, D309, and V331; that span reads RPIDQ.

Belongs to the EPSP synthase family. MurA subfamily.

The protein localises to the cytoplasm. It catalyses the reaction phosphoenolpyruvate + UDP-N-acetyl-alpha-D-glucosamine = UDP-N-acetyl-3-O-(1-carboxyvinyl)-alpha-D-glucosamine + phosphate. The protein operates within cell wall biogenesis; peptidoglycan biosynthesis. Functionally, cell wall formation. Adds enolpyruvyl to UDP-N-acetylglucosamine. The sequence is that of UDP-N-acetylglucosamine 1-carboxyvinyltransferase from Anaeromyxobacter dehalogenans (strain 2CP-C).